The chain runs to 130 residues: Small ribosomal subunit protein uS9 (130 aa).

The protein belongs to the universal ribosomal protein uS9 family.

The chain is Small ribosomal subunit protein uS9 from Thioalkalivibrio sulfidiphilus (strain HL-EbGR7).